A 280-amino-acid polypeptide reads, in one-letter code: Chaperone protein LppX (280 aa).

The signal sequence occupies residues 1–18 (MRKWLIFLLIAAVAGLSA). Cys19 carries N-palmitoyl cysteine lipidation. Cys19 carries S-diacylglycerol cysteine lipidation.

The protein resides in the cell membrane. In terms of biological role, is required for the expression of the adjacently encoded xylanase Xyn11E in an active form. LppX seems to act as a specific chaperone necessary for the correct folding of the xylanase during secretion across the cytoplasmic membrane. The chain is Chaperone protein LppX from Paenibacillus barcinonensis.